Consider the following 773-residue polypeptide: Phenylalanine--tRNA ligase beta subunit (773 aa).

The region spanning 39–150 is the tRNA-binding domain; that stretch reads LKAPDKVVVG…GKLELGRPLN (112 aa). A B5 domain is found at 391 to 467; that stretch reads KELPIIPISI…RIIGIDNIAS (77 aa). Positions 445, 451, 454, and 455 each coordinate Mg(2+). Positions 682–773 constitute an FDX-ACB domain; it reads SKFPAITRDL…TLKNLGLDLR (92 aa).

It belongs to the phenylalanyl-tRNA synthetase beta subunit family. Type 1 subfamily. In terms of assembly, tetramer of two alpha and two beta subunits. Requires Mg(2+) as cofactor.

It localises to the cytoplasm. It catalyses the reaction tRNA(Phe) + L-phenylalanine + ATP = L-phenylalanyl-tRNA(Phe) + AMP + diphosphate + H(+). This chain is Phenylalanine--tRNA ligase beta subunit (pheT), found in Campylobacter jejuni subsp. jejuni serotype O:2 (strain ATCC 700819 / NCTC 11168).